Reading from the N-terminus, the 406-residue chain is Succinylornithine transaminase (406 aa).

An N6-(pyridoxal phosphate)lysine modification is found at lysine 252.

Belongs to the class-III pyridoxal-phosphate-dependent aminotransferase family. AstC subfamily. Pyridoxal 5'-phosphate is required as a cofactor.

It carries out the reaction N(2)-succinyl-L-ornithine + 2-oxoglutarate = N-succinyl-L-glutamate 5-semialdehyde + L-glutamate. The protein operates within amino-acid degradation; L-arginine degradation via AST pathway; L-glutamate and succinate from L-arginine: step 3/5. Catalyzes the transamination of N(2)-succinylornithine and alpha-ketoglutarate into N(2)-succinylglutamate semialdehyde and glutamate. Can also act as an acetylornithine aminotransferase. The polypeptide is Succinylornithine transaminase (Escherichia coli (strain 55989 / EAEC)).